The chain runs to 412 residues: D-amino acid dehydrogenase 3 (412 aa).

4–18 is an FAD binding site; that stretch reads IVVIGAGIAGVSTAY.

This sequence belongs to the DadA oxidoreductase family. It depends on FAD as a cofactor.

The catalysed reaction is a D-alpha-amino acid + A + H2O = a 2-oxocarboxylate + AH2 + NH4(+). Its function is as follows. Oxidative deamination of D-amino acids. The sequence is that of D-amino acid dehydrogenase 3 (dadA3) from Mesorhizobium japonicum (strain LMG 29417 / CECT 9101 / MAFF 303099) (Mesorhizobium loti (strain MAFF 303099)).